Reading from the N-terminus, the 516-residue chain is 3-ketoacyl-CoA synthase 4 (516 aa).

A run of 2 helical transmembrane segments spans residues 48 to 68 and 87 to 107; these read LISN…SVEA and LVSI…YVMT. In terms of domain architecture, FAE spans 104-393; sequence YVMTRPRPVY…FFMTLVVKKL (290 aa). Active-site residues include Cys-248, His-327, His-411, His-415, His-444, and Asn-448.

The protein belongs to the thiolase-like superfamily. Chalcone/stilbene synthases family. In terms of tissue distribution, expressed at low levels in siliques, flowers, leaves and stems.

It localises to the membrane. The enzyme catalyses a very-long-chain acyl-CoA + malonyl-CoA + H(+) = a very-long-chain 3-oxoacyl-CoA + CO2 + CoA. It functions in the pathway lipid metabolism; fatty acid biosynthesis. The chain is 3-ketoacyl-CoA synthase 4 from Arabidopsis thaliana (Mouse-ear cress).